We begin with the raw amino-acid sequence, 171 residues long: UPF0398 protein MGAS9429_Spy1349 (171 aa).

It belongs to the UPF0398 family.

This Streptococcus pyogenes serotype M12 (strain MGAS9429) protein is UPF0398 protein MGAS9429_Spy1349.